The following is a 382-amino-acid chain: Proton extrusion protein PxcA (382 aa).

A run of 4 helical transmembrane segments spans residues 156–176 (TLIS…VQQV), 257–277 (AVKN…VCLF), 305–325 (IILF…TVLL), and 340–360 (FILL…KYWI).

The protein belongs to the CemA family.

It is found in the cell inner membrane. Its function is as follows. Required for H(+) efflux immediately after light irradiation to form a rapid H(+) concentration gradient across the thylakoid membranes. Together with PxcL, contributes to transient H(+) uptake following dark to light transition. The chain is Proton extrusion protein PxcA from Synechococcus sp. (strain CC9311).